Reading from the N-terminus, the 238-residue chain is 1-(5-phosphoribosyl)-5-[(5-phosphoribosylamino)methylideneamino] imidazole-4-carboxamide isomerase (238 aa).

Aspartate 8 serves as the catalytic Proton acceptor. Catalysis depends on aspartate 129, which acts as the Proton donor.

The protein belongs to the HisA/HisF family.

It localises to the cytoplasm. It carries out the reaction 1-(5-phospho-beta-D-ribosyl)-5-[(5-phospho-beta-D-ribosylamino)methylideneamino]imidazole-4-carboxamide = 5-[(5-phospho-1-deoxy-D-ribulos-1-ylimino)methylamino]-1-(5-phospho-beta-D-ribosyl)imidazole-4-carboxamide. It participates in amino-acid biosynthesis; L-histidine biosynthesis; L-histidine from 5-phospho-alpha-D-ribose 1-diphosphate: step 4/9. The chain is 1-(5-phosphoribosyl)-5-[(5-phosphoribosylamino)methylideneamino] imidazole-4-carboxamide isomerase from Jannaschia sp. (strain CCS1).